The sequence spans 327 residues: GMP reductase (327 aa).

The active-site Thioimidate intermediate is Cys-176. 205 to 228 (IIADGGIRTHGDIAKSIRFGASMV) is a binding site for NADP(+).

This sequence belongs to the IMPDH/GMPR family. GuaC type 2 subfamily.

It carries out the reaction IMP + NH4(+) + NADP(+) = GMP + NADPH + 2 H(+). Functionally, catalyzes the irreversible NADPH-dependent deamination of GMP to IMP. It functions in the conversion of nucleobase, nucleoside and nucleotide derivatives of G to A nucleotides, and in maintaining the intracellular balance of A and G nucleotides. The protein is GMP reductase of Streptococcus agalactiae serotype Ia (strain ATCC 27591 / A909 / CDC SS700).